The following is a 485-amino-acid chain: Glutamyl-tRNA(Gln) amidotransferase subunit A (485 aa).

Active-site charge relay system residues include lysine 79 and serine 154. Serine 178 acts as the Acyl-ester intermediate in catalysis.

Belongs to the amidase family. GatA subfamily. In terms of assembly, heterotrimer of A, B and C subunits.

The catalysed reaction is L-glutamyl-tRNA(Gln) + L-glutamine + ATP + H2O = L-glutaminyl-tRNA(Gln) + L-glutamate + ADP + phosphate + H(+). Its function is as follows. Allows the formation of correctly charged Gln-tRNA(Gln) through the transamidation of misacylated Glu-tRNA(Gln) in organisms which lack glutaminyl-tRNA synthetase. The reaction takes place in the presence of glutamine and ATP through an activated gamma-phospho-Glu-tRNA(Gln). This is Glutamyl-tRNA(Gln) amidotransferase subunit A from Clostridium botulinum (strain ATCC 19397 / Type A).